The sequence spans 341 residues: KRR1 small subunit processome component homolog (341 aa).

Residues 126–194 (DIIKIGNLVH…VRDIVLETMN (69 aa)) enclose the KH domain. Positions 230–244 (KNKNISKRKQPKSRK) are enriched in basic residues. The interval 230–327 (KNKNISKRKQ…RPSEASKVDV (98 aa)) is disordered. Positions 271 to 341 (FLNKEQKQAK…AKLLKANKQK (71 aa)) form a coiled coil. Composition is skewed to basic and acidic residues over residues 272–303 (LNKEQKQAKRQQERVAKQAEAAKKQDERRNKD) and 313–327 (EQNRKRPSEASKVDV).

The protein belongs to the KRR1 family. Monomer. Component of the ribosomal small subunit (SSU) processome.

It is found in the nucleus. It localises to the nucleolus. Required for 40S ribosome biogenesis. Involved in nucleolar processing of pre-18S ribosomal RNA and ribosome assembly. Binds to RNA. Required for female germline development, cell viability during eye development and for survival of dividing cells and epithelial cells during early wing disk development. The chain is KRR1 small subunit processome component homolog from Drosophila grimshawi (Hawaiian fruit fly).